Reading from the N-terminus, the 802-residue chain is Fibroblast growth factor receptor 4 (802 aa).

An N-terminal signal peptide occupies residues 1–21 (MRLLLALLGVLLSVPGPPVLS). The region spanning 22–118 (LEASEEVELE…VLQNLTLITG (97 aa)) is the Ig-like C2-type 1 domain. The Extracellular segment spans residues 22–369 (LEASEEVELE…AAAPEARYTD (348 aa)). An intrachain disulfide couples C57 to C101. A glycan (N-linked (GlcNAc...) asparagine) is linked at N112. The tract at residues 119–148 (DSLTSSNDDEDPKSHRDPSNRHSYPQQAPY) is disordered. 2 Ig-like C2-type domains span residues 152 to 240 (PQRM…YLLD) and 249 to 349 (PILQ…AWLT). A disulfide bridge links C172 with C224. Residues N258, N290, N311, and N322 are each glycosylated (N-linked (GlcNAc...) asparagine). C271 and C333 are joined by a disulfide. Residues 370-390 (IILYASGSLALAVLLLLAGLY) form a helical membrane-spanning segment. At Y390 the chain carries Phosphotyrosine; in variant R-388. The Cytoplasmic segment spans residues 391 to 802 (RGQALHGRHP…SFPFGSGVQT (412 aa)). The 289-residue stretch at 467–755 (LVLGKPLGEG…VLLAVSEEYL (289 aa)) folds into the Protein kinase domain. ATP contacts are provided by residues 473 to 481 (LGEGCFGQV) and K503. At S573 the chain carries Phosphoserine. D612 acts as the Proton acceptor in catalysis. Residues Y642, Y643, and Y754 each carry the phosphotyrosine; by autocatalysis modification.

It belongs to the protein kinase superfamily. Tyr protein kinase family. Fibroblast growth factor receptor subfamily. As to quaternary structure, monomer. Homodimer after ligand binding. Interacts with FGF1, FGF2, FGF4, FGF6, FGF8, FGF9, FGF16, FGF17, FGF18, FGF19, FGF21 and FGF23 (in vitro). Binding affinity for FGF family members is enhanced by interactions between FGFs and heparan sulfate proteoglycans. Interacts with KLB; this strongly increases the affinity for FGF19 and FGF23. Affinity for FGF19 is strongly increased by KLB and sulfated glycosaminoglycans. KLB and KL both interact with the core-glycosylated FGFR4 in the endoplasmic reticulum and promote its degradation, so that only FGFR4 with fully mature N-glycans is expressed at the cell surface. Identified in a complex with NCAM1, CDH2, PLCG1, FRS2, SRC, SHC1, GAP43 and CTTN. Interacts with MMP14 and HIP1. Interacts with STAT3. N-glycosylated. Full maturation of the glycan chains in the Golgi is essential for high affinity interaction with FGF19. Post-translationally, ubiquitinated. Subject to proteasomal degradation when not fully glycosylated. In terms of processing, autophosphorylated. Binding of FGF family members together with heparan sulfate proteoglycan or heparin promotes receptor dimerization and autophosphorylation on tyrosine residues. Autophosphorylation occurs in trans between the two FGFR molecules present in the dimer. As to expression, expressed in gastrointestinal epithelial cells, pancreas, and gastric and pancreatic cancer cell lines.

Its subcellular location is the cell membrane. The protein localises to the endosome. The protein resides in the endoplasmic reticulum. It is found in the secreted. It catalyses the reaction L-tyrosyl-[protein] + ATP = O-phospho-L-tyrosyl-[protein] + ADP + H(+). Present in an inactive conformation in the absence of bound ligand. Ligand binding leads to dimerization and activation by autophosphorylation on tyrosine residues. Its function is as follows. Tyrosine-protein kinase that acts as a cell-surface receptor for fibroblast growth factors and plays a role in the regulation of cell proliferation, differentiation and migration, and in regulation of lipid metabolism, bile acid biosynthesis, glucose uptake, vitamin D metabolism and phosphate homeostasis. Required for normal down-regulation of the expression of CYP7A1, the rate-limiting enzyme in bile acid synthesis, in response to FGF19. Phosphorylates PLCG1 and FRS2. Ligand binding leads to the activation of several signaling cascades. Activation of PLCG1 leads to the production of the cellular signaling molecules diacylglycerol and inositol 1,4,5-trisphosphate. Phosphorylation of FRS2 triggers recruitment of GRB2, GAB1, PIK3R1 and SOS1, and mediates activation of RAS, MAPK1/ERK2, MAPK3/ERK1 and the MAP kinase signaling pathway, as well as of the AKT1 signaling pathway. Promotes SRC-dependent phosphorylation of the matrix protease MMP14 and its lysosomal degradation. FGFR4 signaling is down-regulated by receptor internalization and degradation; MMP14 promotes internalization and degradation of FGFR4. Mutations that lead to constitutive kinase activation or impair normal FGFR4 inactivation lead to aberrant signaling. The chain is Fibroblast growth factor receptor 4 (FGFR4) from Homo sapiens (Human).